A 589-amino-acid chain; its full sequence is Protein drl-1 (589 aa).

The interval 1–51 is disordered; that stretch reads MHSEEKYLHIPNNTKYPEIIVEEEEEDPSEEERSELSETDDVATPLRPSDT. Positions 20 to 41 are enriched in acidic residues; the sequence is IVEEEEEDPSEEERSELSETDD. One can recognise a Protein kinase domain in the interval 97-373; sequence WRINEDVMKD…QNLLESHGSK (277 aa). The next 3 helical transmembrane spans lie at 429–449, 456–476, and 491–511; these read GFIP…VLLV, LCAA…IFLI, and GFVV…TTLC.

This sequence belongs to the protein kinase superfamily. STE Ser/Thr protein kinase family. As to expression, expressed in vulval and body wall muscles, hypodermis, seam cells and tissues next to pharynx and anus.

The protein resides in the membrane. Its function is as follows. Negatively regulates lifespan and health span probably by participating in nutrient sensing. The chain is Protein drl-1 from Caenorhabditis elegans.